Consider the following 82-residue polypeptide: Acyl carrier protein (82 aa).

A Carrier domain is found at 3–77 (SSIFDKVQNI…QAIEFIQHAI (75 aa)). The residue at position 37 (S37) is an O-(pantetheine 4'-phosphoryl)serine.

The protein belongs to the acyl carrier protein (ACP) family. Post-translationally, 4'-phosphopantetheine is transferred from CoA to a specific serine of apo-ACP by AcpS. This modification is essential for activity because fatty acids are bound in thioester linkage to the sulfhydryl of the prosthetic group.

The protein localises to the plastid. It localises to the chloroplast. Its pathway is lipid metabolism; fatty acid biosynthesis. Functionally, carrier of the growing fatty acid chain in fatty acid biosynthesis. This chain is Acyl carrier protein, found in Gracilaria tenuistipitata var. liui (Red alga).